The sequence spans 338 residues: MTCTIVVGGQWGDEGKGKIISYLCKKDNPSIIARGGVGPNAGHTVEVDGEKYGIRMVPTGFPNVNAKLAVGAGVLTDPEVLIKEIKMLEKFNVGERILVDYRCGIIEEVHKELDKSNEHLSKEIGSTGTGCGPANVDRAMRTLKQGKDVESISKYLGDVSEAVNEALESGDNVLIEGTQGSLLSLFYGSYPYVTSKDTNAASFAADVGIGPTKIDEVVAVFKSYPTRVGEGPFPTEMSLQEAENLGVVEYGTVTGRRRRVGYFDHELAKKVCRLNGATQIAITCLDKYDSDCYGITDYEKLSEKGKAFIKEVEEKVGVKVTLISTGPKLEQTIDVRNE.

Residues 12–18 (GDEGKGK) and 42–44 (GHT) each bind GTP. Catalysis depends on Asp-13, which acts as the Proton acceptor. Mg(2+) is bound by residues Asp-13 and Gly-42. IMP is bound by residues 13–16 (DEGK), 40–43 (NAGH), Thr-127, Arg-141, Gln-179, Thr-194, and Arg-256. The active-site Proton donor is the His-43. 252–258 (TVTGRRR) lines the substrate pocket. Residues Arg-258, 284-286 (CLD), and 324-326 (STG) contribute to the GTP site.

It belongs to the adenylosuccinate synthetase family. Homodimer. It depends on Mg(2+) as a cofactor.

It is found in the cytoplasm. The enzyme catalyses IMP + L-aspartate + GTP = N(6)-(1,2-dicarboxyethyl)-AMP + GDP + phosphate + 2 H(+). Its pathway is purine metabolism; AMP biosynthesis via de novo pathway; AMP from IMP: step 1/2. In terms of biological role, plays an important role in the de novo pathway of purine nucleotide biosynthesis. Catalyzes the first committed step in the biosynthesis of AMP from IMP. The sequence is that of Adenylosuccinate synthetase from Methanococcus maripaludis (strain DSM 14266 / JCM 13030 / NBRC 101832 / S2 / LL).